We begin with the raw amino-acid sequence, 335 residues long: MSHAGAIAAIGVALIAAALFSAIHKIEEGHVGVYYRGGALLTSTSGPGFHLMLPFITSFKSVQSTMQTDEVKNVPCGTSGGVMIYFDRIEVVNYLIPSAVYDIVKNYTADYDKTLIFNKIHHELNQFCSVHNLQEVYIELFDQIDENLKLALQKDLNSMAPGLVIQAVRVTKPNIPEAIRRNYELMESEKTKLLIAAQKQKVVEKEAETERKKAIIEAEKVAQVAEIKYGQKVMEKETEKKISEIEDSAFVAREKAKADAEYYTSQKTADANRLKLTPEYLQLVKYQAIAANSKIYFGQDIPNMFMDSSAGPSVQSATLLQDDSPALNEPAVGDE.

The Cytoplasmic portion of the chain corresponds to 1–2 (MS). The helical transmembrane segment at 3–23 (HAGAIAAIGVALIAAALFSAI) threads the bilayer. At 24-335 (HKIEEGHVGV…ALNEPAVGDE (312 aa)) the chain is on the lumenal side. N106 carries an N-linked (GlcNAc...) asparagine glycan. The segment covering 310 to 321 (AGPSVQSATLLQ) has biased composition (polar residues). Positions 310–335 (AGPSVQSATLLQDDSPALNEPAVGDE) are disordered.

This sequence belongs to the band 7/mec-2 family.

It is found in the endoplasmic reticulum membrane. In terms of biological role, mediates the endoplasmic reticulum-associated degradation (ERAD) of inositol 1,4,5-trisphosphate receptors (IP3Rs). Promotes sterol-accelerated ERAD of HMGCR. Involved in regulation of cellular cholesterol homeostasis by regulation the SREBP signaling pathway. In Xenopus tropicalis (Western clawed frog), this protein is Erlin-2 (erlin2).